Reading from the N-terminus, the 152-residue chain is Proline-rich acidic protein 1 (152 aa).

A signal peptide spans 1–20 (MKRFLLATCLVAVLLWEAGA).

As to quaternary structure, interacts with MTTP. Interacts with MAD1L1. Highly expressed in the small intestine where it shows a proximal-distal graded expression.

It is found in the secreted. It localises to the endoplasmic reticulum. Functionally, lipid-binding protein which promotes lipid absorption by facilitating MTTP-mediated lipid transfer (mainly triglycerides and phospholipids) and MTTP-mediated apoB lipoprotein assembly and secretion. Protects the gastrointestinal epithelium from irradiation-induced apoptosis. May play an important role in maintaining normal growth homeostasis in epithelial cells. Involved in p53/TP53-dependent cell survival after DNA damage. The protein is Proline-rich acidic protein 1 (Prap1) of Rattus norvegicus (Rat).